A 308-amino-acid chain; its full sequence is Ribosomal RNA small subunit methyltransferase H (308 aa).

S-adenosyl-L-methionine contacts are provided by residues 36–38, Asp55, Phe86, Asp103, and Gln110; that span reads GGH.

It belongs to the methyltransferase superfamily. RsmH family.

It is found in the cytoplasm. The catalysed reaction is cytidine(1402) in 16S rRNA + S-adenosyl-L-methionine = N(4)-methylcytidine(1402) in 16S rRNA + S-adenosyl-L-homocysteine + H(+). Functionally, specifically methylates the N4 position of cytidine in position 1402 (C1402) of 16S rRNA. This is Ribosomal RNA small subunit methyltransferase H from Helicobacter pylori (strain B38).